The chain runs to 517 residues: GMP synthase [glutamine-hydrolyzing] (517 aa).

One can recognise a Glutamine amidotransferase type-1 domain in the interval 9–202 (KIIVLDYGSQ…AFNVCKAKGD (194 aa)). The active-site Nucleophile is the cysteine 86. Catalysis depends on residues histidine 176 and glutamate 178. The GMPS ATP-PPase domain occupies 203–392 (WSMDSFIDME…LGMPDEIVWR (190 aa)). Residue 230–236 (SGGVDSS) participates in ATP binding.

Homodimer.

It catalyses the reaction XMP + L-glutamine + ATP + H2O = GMP + L-glutamate + AMP + diphosphate + 2 H(+). It functions in the pathway purine metabolism; GMP biosynthesis; GMP from XMP (L-Gln route): step 1/1. In terms of biological role, catalyzes the synthesis of GMP from XMP. The polypeptide is GMP synthase [glutamine-hydrolyzing] (Streptococcus mutans serotype c (strain ATCC 700610 / UA159)).